The primary structure comprises 318 residues: NADH-quinone oxidoreductase subunit H 2 (318 aa).

The next 9 helical transmembrane spans lie at 4–24, 77–97, 106–126, 146–166, 179–199, 214–234, 238–258, 262–282, and 293–313; these read LLIA…AGVF, LAPA…AFAP, VGVL…VLGA, LAYE…AGSF, LWFI…GLAA, LVAG…FLGE, ILLV…GPIL, IWFG…RAAL, and FAWK…AWIA.

It belongs to the complex I subunit 1 family. NDH-1 is composed of 14 different subunits. Subunits NuoA, H, J, K, L, M, N constitute the membrane sector of the complex.

It localises to the cell inner membrane. The enzyme catalyses a quinone + NADH + 5 H(+)(in) = a quinol + NAD(+) + 4 H(+)(out). Functionally, NDH-1 shuttles electrons from NADH, via FMN and iron-sulfur (Fe-S) centers, to quinones in the respiratory chain. The immediate electron acceptor for the enzyme in this species is believed to be ubiquinone. Couples the redox reaction to proton translocation (for every two electrons transferred, four hydrogen ions are translocated across the cytoplasmic membrane), and thus conserves the redox energy in a proton gradient. This subunit may bind ubiquinone. This is NADH-quinone oxidoreductase subunit H 2 from Cereibacter sphaeroides (strain ATCC 17023 / DSM 158 / JCM 6121 / CCUG 31486 / LMG 2827 / NBRC 12203 / NCIMB 8253 / ATH 2.4.1.) (Rhodobacter sphaeroides).